Consider the following 343-residue polypeptide: Fructose-1,6-bisphosphatase class 1 (343 aa).

Positions 91, 113, 115, and 116 each coordinate Mg(2+). Substrate is bound by residues 116 to 119 (DGSS), asparagine 210, and lysine 276. A Mg(2+)-binding site is contributed by glutamate 282.

This sequence belongs to the FBPase class 1 family. Homotetramer. Mg(2+) serves as cofactor.

Its subcellular location is the cytoplasm. It carries out the reaction beta-D-fructose 1,6-bisphosphate + H2O = beta-D-fructose 6-phosphate + phosphate. Its pathway is carbohydrate biosynthesis; gluconeogenesis. This is Fructose-1,6-bisphosphatase class 1 from Parvibaculum lavamentivorans (strain DS-1 / DSM 13023 / NCIMB 13966).